A 432-amino-acid polypeptide reads, in one-letter code: Trigger factor (432 aa).

The PPIase FKBP-type domain occupies 162–247; it reads GDLVKFDYQG…VKEVQAPVLP (86 aa).

It belongs to the FKBP-type PPIase family. Tig subfamily.

The protein localises to the cytoplasm. The catalysed reaction is [protein]-peptidylproline (omega=180) = [protein]-peptidylproline (omega=0). Functionally, involved in protein export. Acts as a chaperone by maintaining the newly synthesized protein in an open conformation. Functions as a peptidyl-prolyl cis-trans isomerase. This Thiobacillus denitrificans (strain ATCC 25259 / T1) protein is Trigger factor.